Here is a 156-residue protein sequence, read N- to C-terminus: ATP synthase subunit b (156 aa).

A helical membrane pass occupies residues 11-31 (AIAFVLFVLFCMKYVWPPLMA).

This sequence belongs to the ATPase B chain family. In terms of assembly, F-type ATPases have 2 components, F(1) - the catalytic core - and F(0) - the membrane proton channel. F(1) has five subunits: alpha(3), beta(3), gamma(1), delta(1), epsilon(1). F(0) has three main subunits: a(1), b(2) and c(10-14). The alpha and beta chains form an alternating ring which encloses part of the gamma chain. F(1) is attached to F(0) by a central stalk formed by the gamma and epsilon chains, while a peripheral stalk is formed by the delta and b chains.

The protein localises to the cell inner membrane. F(1)F(0) ATP synthase produces ATP from ADP in the presence of a proton or sodium gradient. F-type ATPases consist of two structural domains, F(1) containing the extramembraneous catalytic core and F(0) containing the membrane proton channel, linked together by a central stalk and a peripheral stalk. During catalysis, ATP synthesis in the catalytic domain of F(1) is coupled via a rotary mechanism of the central stalk subunits to proton translocation. In terms of biological role, component of the F(0) channel, it forms part of the peripheral stalk, linking F(1) to F(0). This is ATP synthase subunit b from Citrobacter koseri (strain ATCC BAA-895 / CDC 4225-83 / SGSC4696).